The chain runs to 589 residues: MASKAMPRAPPAAPNLQSLKLCSQNDSSLETTSPSKRSALVPGRSAESSKPNPEVVQKEQKSTQHQNESIDLTGSNDPAEVKAEGNLVPKRLADEEKGVVEDGIANGSLKSSSALGKEHGIASASGSARLVGRSETGERGFSSSRCRPSTSSDVSDESACSSISSVTKPHKANDSRWEAIQMIRTRDGILGLSHFKLLKKLGCGDIGSVYLSELSGTKSYFAMKVMDKASLASRKKLLRAQTEKEILQCLDHPFLPTLYTHFETDKFSCLVMEFCPGGDLHTLRQRQRGKYFPEQAVKFYVAEILLAMEYLHMLGIIYRDLKPENVLVREDGHIMLSDFDLSLRCAVSPTLIRSSNPDAEALRKNNQAYCVQPACVEPSCMIQPSCATPTTCFGPRFFSKSKKDRKPKPEVVNQVSPWPELIAEPSDARSMSFVGTHEYLAPEIIKGEGHGSAVDWWTFGIFLYELLFGKTPFKGSGNRATLFNVIGQPLRFPEYPVVSFSARDLIRGLLVKEPQQRLGCKRGATEIKQHPFFEGVNWALIRCASPPEVPRPVEIERPPKQPVSTSEPAAAPSDAAQKSSDSYLEFDFF.

A disordered region spans residues 1–167; the sequence is MASKAMPRAP…SACSSISSVT (167 aa). Composition is skewed to polar residues over residues 15–36 and 63–76; these read NLQS…SPSK and TQHQ…TGSN. Residues 91-100 show a composition bias toward basic and acidic residues; the sequence is RLADEEKGVV. Positions 142 to 165 are enriched in low complexity; sequence SSSRCRPSTSSDVSDESACSSISS. One can recognise a Protein kinase domain in the interval 195-533; it reads FKLLKKLGCG…ATEIKQHPFF (339 aa). Residues 201-209 and Lys-224 contribute to the ATP site; that span reads LGCGDIGSV. Catalysis depends on Asp-320, which acts as the Proton acceptor. Residues 551–589 are disordered; the sequence is RPVEIERPPKQPVSTSEPAAAPSDAAQKSSDSYLEFDFF.

Belongs to the protein kinase superfamily. Ser/Thr protein kinase family.

The catalysed reaction is L-seryl-[protein] + ATP = O-phospho-L-seryl-[protein] + ADP + H(+). It catalyses the reaction L-threonyl-[protein] + ATP = O-phospho-L-threonyl-[protein] + ADP + H(+). May play a role in the regulation of metabolism and signal transduction processes. This chain is Protein kinase G11A, found in Oryza sativa subsp. japonica (Rice).